The sequence spans 206 residues: Ribonuclease HII (206 aa).

The RNase H type-2 domain maps to 1 to 206; the sequence is MKVLGIDEAG…SWATVQKKKQ (206 aa). Asp7, Glu8, and Asp105 together coordinate a divalent metal cation.

The protein belongs to the RNase HII family. Mn(2+) serves as cofactor. Requires Mg(2+) as cofactor.

It localises to the cytoplasm. It carries out the reaction Endonucleolytic cleavage to 5'-phosphomonoester.. In terms of biological role, endonuclease that specifically degrades the RNA of RNA-DNA hybrids. This is Ribonuclease HII (rnhB) from Methanothermobacter thermautotrophicus (strain ATCC 29096 / DSM 1053 / JCM 10044 / NBRC 100330 / Delta H) (Methanobacterium thermoautotrophicum).